The following is a 655-amino-acid chain: p-hydroxybenzoic acid efflux pump subunit AaeB (655 aa).

The next 11 helical transmembrane spans lie at 13 to 33 (FAVK…HFQL), 38 to 58 (WAVL…GGEP), 69 to 89 (LRII…IAMI), 93 to 113 (LLMI…SSLV), 121 to 141 (WGLA…EPLL), 152 to 172 (EIVI…PRSI), 370 to 390 (LFWL…IAVV), 407 to 427 (FIYG…VIIP), 431 to 451 (QSML…GIEV), 459 to 479 (MGAL…TFHF), and 482 to 502 (FLDS…VILL).

This sequence belongs to the aromatic acid exporter ArAE (TC 2.A.85) family.

The protein localises to the cell inner membrane. In terms of biological role, forms an efflux pump with AaeA. Could function as a metabolic relief valve, allowing to eliminate certain compounds when they accumulate to high levels in the cell. This is p-hydroxybenzoic acid efflux pump subunit AaeB from Escherichia coli O81 (strain ED1a).